The primary structure comprises 633 residues: Endosomal/prevacuolar sodium/hydrogen exchanger (633 aa).

A signal peptide spans 1–21; sequence MLSKVLLNIAFKVLLTTAKRA. Topologically, residues 22 to 61 are lumenal; the sequence is VDPDDDDELLPSPDLPGSDDPIAGDPDVDLNPVTEEMFSS. The tract at residues 25 to 44 is disordered; that stretch reads DDDDELLPSPDLPGSDDPIA. The span at 31 to 42 shows a compositional bias: low complexity; that stretch reads LPSPDLPGSDDP. A helical transmembrane segment spans residues 62–82; the sequence is WALFIMLLLLISALWSSYYLT. At 83–85 the chain is on the cytoplasmic side; sequence QKR. A helical membrane pass occupies residues 86-106; it reads IRAVHETVLSIFYGMVIGLII. Over 107-117 the chain is Lumenal; sequence RMSPGHYIQDT. A helical membrane pass occupies residues 118–138; sequence VTFNSSYFFNVLLPPIILNSG. Residues 124-133 carry the Amiloride-binding motif; the sequence is YFFNVLLPPI. Topologically, residues 139 to 152 are cytoplasmic; the sequence is YELNQVNFFNNMLS. A helical transmembrane segment spans residues 153–173; sequence ILIFAIPGTFISAVVIGIILY. Topologically, residues 174 to 189 are lumenal; the sequence is IWTFLGLESIDISFAD. Residues 190–211 traverse the membrane as a helical segment; the sequence is AMSVGATLSATDPVTILSIFNA. Over 212–217 the chain is Cytoplasmic; that stretch reads YKVDPK. A helical membrane pass occupies residues 218–238; the sequence is LYTIIFGESLLNDAISIVMFE. At 239 to 258 the chain is on the lumenal side; it reads TCQKFHGQPATFSSVFEGAG. The helical transmembrane segment at 259 to 279 threads the bilayer; sequence LFLMTFSVSLLIGVLIGILVA. Residues 280–288 are Cytoplasmic-facing; sequence LLLKHTHIR. A helical transmembrane segment spans residues 289-308; sequence RYPQIESCLILLIAYESYFF. The Lumenal portion of the chain corresponds to 309 to 313; the sequence is SNGCH. A helical membrane pass occupies residues 314–333; sequence MSGIVSLLFCGITLKHYAYY. Over 334 to 344 the chain is Cytoplasmic; that stretch reads NMSRRSQITIK. The chain crosses the membrane as a helical span at residues 345 to 364; it reads YIFQLLARLSENFIFIYLGL. Residues 365–376 lie on the Cytoplasmic side of the membrane; sequence ELFTEVELVYKP. A helical membrane pass occupies residues 377–397; that stretch reads LLIIVAAISICVARWCAVFPL. The Lumenal portion of the chain corresponds to 398 to 431; it reads SQFVNWIYRVKTIRSMSGITGENISVPDEIPYNY. N-linked (GlcNAc...) asparagine glycosylation occurs at Asn420. Residues 432–452 form a helical membrane-spanning segment; it reads QMMTFWAGLRGAVGVALALGI. Residues 453-457 lie on the Cytoplasmic side of the membrane; sequence QGEYK. A helical membrane pass occupies residues 458–478; the sequence is FTLLATVLVVVVLTVIIFGGT. Thr490 bears the Phosphothreonine mark. Ser494 is modified (phosphoserine). Thr498 carries the post-translational modification Phosphothreonine. The residue at position 499 (Ser499) is a Phosphoserine. N-linked (GlcNAc...) asparagine glycans are attached at residues Asn515, Asn550, and Asn563. The tract at residues 553-578 is disordered; the sequence is TTGGNTFGGLNETENTSPNPARSSMD. Residues 564 to 574 show a composition bias toward polar residues; that stretch reads ETENTSPNPAR. The residue at position 569 (Ser569) is a Phosphoserine.

Belongs to the monovalent cation:proton antiporter 1 (CPA1) transporter (TC 2.A.36) family. As to quaternary structure, interacts with CYP6.

It is found in the endosome membrane. The protein resides in the prevacuolar compartment membrane. Endosomal/prevacuolar electroneutral Na(+)/H(+) exchanger which mediates intracellular sequestration of Na(+) cations, regulates vacuolar pH and contributes to osmotolerance following sudden exposure to hyperosmotic media. Also contributes to the postdiauxic/stationary phase resistance to osmotic stress and allows for the continued growth of cells until the acquired osmotolerance response can occur. Involved in hygromycin resistance probably through its influence on the electrochemical proton gradient affecting secondarily the entrance of hygromycin. Mediates pH-dependent vesicle trafficking out of the endosome. Contributes to K(+) sequestration and homeostasis. The polypeptide is Endosomal/prevacuolar sodium/hydrogen exchanger (NHX1) (Saccharomyces cerevisiae (strain ATCC 204508 / S288c) (Baker's yeast)).